Here is a 378-residue protein sequence, read N- to C-terminus: uncharacterized protein (378 aa).

The protein belongs to the mimivirus L17x/L18x family.

This is an uncharacterized protein from Acanthamoeba polyphaga (Amoeba).